The primary structure comprises 586 residues: Asparagine synthetase [glutamine-hydrolyzing] (586 aa).

The For GATase activity role is filled by C2. One can recognise a Glutamine amidotransferase type-2 domain in the interval 2 to 185 (CGILAVLGVV…PGHLYSSKTG (184 aa)). L-glutamine is bound by residues 50-54 (RLAII), 75-77 (NGE), and D98. In terms of domain architecture, Asparagine synthetase spans 193–516 (PPWFSETVPS…PQDSARETVP (324 aa)). ATP contacts are provided by residues L231, I267, and 341-342 (SG).

It catalyses the reaction L-aspartate + L-glutamine + ATP + H2O = L-asparagine + L-glutamate + AMP + diphosphate + H(+). It functions in the pathway amino-acid biosynthesis; L-asparagine biosynthesis; L-asparagine from L-aspartate (L-Gln route): step 1/1. Its function is as follows. Essential for nitrogen assimilation, distribution and remobilization within the plant via the phloem. This Zea mays (Maize) protein is Asparagine synthetase [glutamine-hydrolyzing] (ASN1).